The sequence spans 945 residues: LPS-assembly protein LptD (945 aa).

A signal peptide spans 1 to 33; that stretch reads MALKSPAFRKKFPLLVTGSLLALQPLATSFVVA. The disordered stretch occupies residues 56 to 98; sequence AQLPPRPVHDANSVSSSVATAADATGEEASGDKSKLVTEAKGR. Residues 65–79 are compositionally biased toward low complexity; that stretch reads DANSVSSSVATAADA. Basic and acidic residues predominate over residues 85-98; sequence SGDKSKLVTEAKGR.

The protein belongs to the LptD family. As to quaternary structure, component of the lipopolysaccharide transport and assembly complex. Interacts with LptE and LptA.

It is found in the cell outer membrane. In terms of biological role, together with LptE, is involved in the assembly of lipopolysaccharide (LPS) at the surface of the outer membrane. The sequence is that of LPS-assembly protein LptD from Pseudomonas fluorescens (strain ATCC BAA-477 / NRRL B-23932 / Pf-5).